Here is a 208-residue protein sequence, read N- to C-terminus: Small ribosomal subunit protein uS4 (208 aa).

The region spanning 97–160 is the S4 RNA-binding domain; that stretch reads TRLDNVCYRM…QKQLRVQEAL (64 aa).

It belongs to the universal ribosomal protein uS4 family. In terms of assembly, part of the 30S ribosomal subunit. Contacts protein S5. The interaction surface between S4 and S5 is involved in control of translational fidelity.

In terms of biological role, one of the primary rRNA binding proteins, it binds directly to 16S rRNA where it nucleates assembly of the body of the 30S subunit. With S5 and S12 plays an important role in translational accuracy. This chain is Small ribosomal subunit protein uS4, found in Xanthomonas oryzae pv. oryzae (strain MAFF 311018).